Consider the following 1354-residue polypeptide: Rho-associated protein kinase 1 (1354 aa).

Residue Ser-2 is modified to N-acetylserine. Residues 76–338 enclose the Protein kinase domain; that stretch reads YEVVKVIGRG…VEEIKRHLFF (263 aa). Residues 82–90 and Lys-105 contribute to the ATP site; that span reads IGRGAFGEV. Asp-198 acts as the Proton acceptor in catalysis. Residues 341–409 form the AGC-kinase C-terminal domain; it reads DQWAWETLRD…YSNRRYLSPA (69 aa). Residues 368–727 form an interaction with FHOD1 region; the sequence is FDDLEEDKGD…KKLKEEREAR (360 aa). Residues 422 to 692 adopt a coiled-coil conformation; sequence KSLQENLQKT…RLEQEVNEHK (271 aa). The region spanning 479–556 is the REM-1 domain; that stretch reads STVSQIEKEK…LEEANDLLRT (78 aa). Residues 707–946 are SHROOM3 binding; that stretch reads EAKSVAMCEM…AVSRLEETNS (240 aa). Positions 949 to 1015 constitute a RhoBD domain; the sequence is TKDIELLRKE…LAEIMNRKDF (67 aa). Residues 998-1010 are RHOA binding; it reads LKTQAVNKLAEIM. Residues 1011 to 1102 adopt a coiled-coil conformation; it reads NRKDFKIDKK…KLSDLSDSTS (92 aa). A disordered region spans residues 1101–1120; it reads TSVASFPSADETDPNLPESR. Ser-1105 and Ser-1108 each carry phosphoserine. The segment at 1115–1354 is auto-inhibitory; that stretch reads NLPESRIEGW…VVKNTSGKTS (240 aa). Residues 1118–1317 enclose the PH domain; the sequence is ESRIEGWLSV…WVTHLVKKIP (200 aa). The Phorbol-ester/DAG-type zinc-finger motif lies at 1228 to 1283; the sequence is GHEFIPTLYHFPANCEACAKPLWHVFKPPPALECRRCHVKCHRDHLDKKEDLISPC. Ser-1328 carries the post-translational modification Phosphoserine. The disordered stretch occupies residues 1333 to 1354; it reads STRSTANQSFRKVVKNTSGKTS.

The protein belongs to the protein kinase superfamily. AGC Ser/Thr protein kinase family. As to quaternary structure, homodimer. Interacts with RHOA (activated by GTP), RHOB, RHOC, GEM, MYLC2B, RHOE, PPP1R12A, LIMK1, LIMK2, TSG101, CHORDC1, DAPK3, PFN1, PTEN and JIP3. Interacts with FHOD1 in a Src-dependent manner. Interacts with ITGB1BP1 (via N-terminus and PTB domain). Interacts with SHROOM3. Mg(2+) serves as cofactor. In terms of processing, autophosphorylated on serine and threonine residues. Post-translationally, cleaved by caspase-3 during apoptosis. This leads to constitutive activation of the kinase and membrane blebbing. Detected in corneal epithelium.

The protein resides in the cytoplasm. Its subcellular location is the cytoskeleton. It localises to the microtubule organizing center. The protein localises to the centrosome. It is found in the centriole. The protein resides in the golgi apparatus membrane. Its subcellular location is the cell projection. It localises to the bleb. The protein localises to the cell membrane. It is found in the lamellipodium. The protein resides in the ruffle. The catalysed reaction is L-seryl-[protein] + ATP = O-phospho-L-seryl-[protein] + ADP + H(+). The enzyme catalyses L-threonyl-[protein] + ATP = O-phospho-L-threonyl-[protein] + ADP + H(+). Its activity is regulated as follows. Activated by RHOA binding. Inhibited by Y-27632. Its function is as follows. Protein kinase which is a key regulator of the actin cytoskeleton and cell polarity. Involved in regulation of smooth muscle contraction, actin cytoskeleton organization, stress fiber and focal adhesion formation, neurite retraction, cell adhesion and motility via phosphorylation of DAPK3, GFAP, LIMK1, LIMK2, MYL9/MLC2, TPPP, PFN1 and PPP1R12A. Phosphorylates FHOD1 and acts synergistically with it to promote SRC-dependent non-apoptotic plasma membrane blebbing. Phosphorylates JIP3 and regulates the recruitment of JNK to JIP3 upon UVB-induced stress. Acts as a suppressor of inflammatory cell migration by regulating PTEN phosphorylation and stability. Acts as a negative regulator of VEGF-induced angiogenic endothelial cell activation. Required for centrosome positioning and centrosome-dependent exit from mitosis. Plays a role in terminal erythroid differentiation. Inhibits podocyte motility via regulation of actin cytoskeletal dynamics and phosphorylation of CFL1. Promotes keratinocyte terminal differentiation. Involved in osteoblast compaction through the fibronectin fibrillogenesis cell-mediated matrix assembly process, essential for osteoblast mineralization. May regulate closure of the eyelids and ventral body wall by inducing the assembly of actomyosin bundles. This Oryctolagus cuniculus (Rabbit) protein is Rho-associated protein kinase 1 (ROCK1).